Here is a 322-residue protein sequence, read N- to C-terminus: Pyrroline-5-carboxylate reductase (322 aa).

The next 2 helical transmembrane spans lie at 9 to 29 and 117 to 137; these read YPNV…VGLL and ILIS…LHFW. The interval 302–322 is disordered; the sequence is LSQSAGSHGEDNTTDSKTSRA. Asparagine 313 is a glycosylation site (N-linked (GlcNAc...) asparagine).

It belongs to the pyrroline-5-carboxylate reductase family.

The protein localises to the membrane. It catalyses the reaction L-proline + NADP(+) = (S)-1-pyrroline-5-carboxylate + NADPH + 2 H(+). The enzyme catalyses L-proline + NAD(+) = (S)-1-pyrroline-5-carboxylate + NADH + 2 H(+). The protein operates within alkaloid biosynthesis. In terms of biological role, pyrroline-5-carboxylate reductase; part of the gene cluster that mediates the biosynthesis of paraherquamide, a fungal indole alkaloid that belongs to a family of natural products containing a characteristic bicyclo[2.2.2]diazaoctane core. The first steps in the biosynthesis of paraherquamide is the production of the beta-methyl-proline precursor from L-isoleucine. They require oxidation of a terminally hydroxylated L-isoleucine to the corresponding aldehyde by enzymes which have still to be identified. Spontaneous cyclization and dehydration would yield the 4-methyl pyrolline-5-carboxylic acid, which is then reduced by the pyrroline-5-carboxylate reductase phqD leading to the beta-methyl-proline precursor. The next step of paraherquamide biosynthesis involves coupling of beta-methyl-proline and L-tryptophan by the bimodular NRPS phqB, to produce a monooxopiperazine intermediate. The reductase (R) domain of phqB utilizes NADPH for hydride transfer to reduce the thioester bond of the T domain-tethered linear dipeptide to a hemithioaminal intermediate, which spontaneously cleaves the C-S bond to release the aldehyde product. This compound undergoes spontaneous cyclization and dehydration to give a dienamine which is reverse prenylated at C-2 by the reverse prenyltransferase phqJ. The other prenyltransferase present in the cluster, phqI may be a redundant gene in the pathway. During biosynthetic assembly, the key step to produce the polycyclic core is catalyzed by the bifunctional reductase and intramolecular [4+2] Diels-Alderase, phqE, resulting in formation of the [2.2.2] diazaoctane intermediate preparaherquamide. Following formation of preparaherquamide, an indole 2,3-epoxidation-initiated pinacol-like rearrangement is catalyzed by the phqK FAD-dependent monooxygenase. The prenyltransferase phqA, the cytochrome P450 monooxygenase phqL, and the FAD-linked oxidoreductase phqH (or the cytochrome P450 monooxygenase phqM), are proposed to be involved in the formation of the pyran ring. The FAD-dependent monooxygenase phqK is likely responsible for generation of the spiro-oxindole, and the N-methylation is likely mediated by the phqN methyltransferase leading to the isolable natural product paraherquamide F. However, the order of these biosynthetic steps has still to be determined. In late-stage paraherquamide biosynthesis, the third P450 monooxygenase, phqO, is probably responsible for the C-14 hydroxylation, transforming paraherquamide F to paraherquamide G, and paraherquamide E to the final product paraherquamide A. The expansion from the 6-membered ring pyran (in paraherquamides F and G) to the 7-membered dioxepin ring (in paraherquamides A and E) represents a poorly understood but intriguing process that probably involves the 2-oxoglutarate-dependent dioxygenase phqC. Finally, the remaining members of the paraherquamide cluster, including phqI as well as phqM (or phqH), do not have a clearly prescribed role and appear to be redundant. This chain is Pyrroline-5-carboxylate reductase, found in Penicillium fellutanum.